Here is a 431-residue protein sequence, read N- to C-terminus: MANVVVVGAQWGDEGKGKIVDWLSIEADIVVRFQGGHNAGHTLVIGNQVYKLALLPSGIVRPGKLSVIGNGVVLDPHHLVDEIAKISAQGVTVTPDNLKIADNVTLILALHRELDAHRESASVAGVKIGTTKRGIGPAYEDKVGRRAIRLMDLAEPDSLDEKIDRLLAHHDPLRRGLGLEPVPRAAIRAELEDVAPKVLPYMDAVWDLLETARRDGKRILFEGAQGALLDVDHGTYPFVTSSNTVAANAATGSGLGPKAIGYVLGIAKAYTTRVGGGPFPTELHDETGQRLGDRGHEFGTNTGRRRRCGWFDAVLVRQTVKTSGIDGIALTKLDILDGFEEIKVCVGYLLDGERINRFPASQAAQARVTPIYETMEGWAGTTAGARSWAELPAQAIKYVRRIEELIEAPVALLSTSPQRADTILVHNPFRD.

GTP contacts are provided by residues 12–18 (GDEGKGK) and 40–42 (GHT). Asp13 acts as the Proton acceptor in catalysis. Asp13 and Gly40 together coordinate Mg(2+). IMP contacts are provided by residues 13-16 (DEGK), 38-41 (NAGH), Thr131, Arg145, Gln225, Thr240, and Arg304. His41 serves as the catalytic Proton donor. A substrate-binding site is contributed by 300–306 (TNTGRRR). GTP contacts are provided by residues Arg306, 332 to 334 (KLD), and 414 to 416 (STS).

Belongs to the adenylosuccinate synthetase family. As to quaternary structure, homodimer. It depends on Mg(2+) as a cofactor.

It is found in the cytoplasm. It catalyses the reaction IMP + L-aspartate + GTP = N(6)-(1,2-dicarboxyethyl)-AMP + GDP + phosphate + 2 H(+). It participates in purine metabolism; AMP biosynthesis via de novo pathway; AMP from IMP: step 1/2. Its function is as follows. Plays an important role in the de novo pathway of purine nucleotide biosynthesis. Catalyzes the first committed step in the biosynthesis of AMP from IMP. In Methylocella silvestris (strain DSM 15510 / CIP 108128 / LMG 27833 / NCIMB 13906 / BL2), this protein is Adenylosuccinate synthetase.